Here is a 183-residue protein sequence, read N- to C-terminus: Maltose O-acetyltransferase (183 aa).

Asn83 provides a ligand contact to acetyl-CoA. His113 functions as the Proton donor/acceptor in the catalytic mechanism. Acetyl-CoA-binding positions include Gly140, Ser158, 163 to 164, Arg178, and Lys181; that span reads TK.

It belongs to the transferase hexapeptide repeat family. Homodimer.

It catalyses the reaction D-maltose + acetyl-CoA = 1-O-acetylmaltose + CoA. Its function is as follows. Catalyzes the CoA-dependent transfer of an acetyl group to maltose and other sugars. Acetylates glucose exclusively at the C6 position and maltose at the C6 position of the non-reducing end glucosyl moiety. Is able to acetylate maltooligosaccharides. This is Maltose O-acetyltransferase (maa) from Escherichia coli (strain K12).